The chain runs to 408 residues: LL-diaminopimelate aminotransferase (408 aa).

The substrate site is built by Y15 and G42. Pyridoxal 5'-phosphate contacts are provided by residues Y72, 108-109 (SK), Y132, N187, Y218, and 246-248 (SFS). Substrate-binding residues include K109, Y132, and N187. At K249 the chain carries N6-(pyridoxal phosphate)lysine. Pyridoxal 5'-phosphate contacts are provided by R257 and N292. Residues N292 and R388 each contribute to the substrate site.

Belongs to the class-I pyridoxal-phosphate-dependent aminotransferase family. LL-diaminopimelate aminotransferase subfamily. As to quaternary structure, homodimer. It depends on pyridoxal 5'-phosphate as a cofactor.

The catalysed reaction is (2S,6S)-2,6-diaminopimelate + 2-oxoglutarate = (S)-2,3,4,5-tetrahydrodipicolinate + L-glutamate + H2O + H(+). The protein operates within amino-acid biosynthesis; L-lysine biosynthesis via DAP pathway; LL-2,6-diaminopimelate from (S)-tetrahydrodipicolinate (aminotransferase route): step 1/1. Its function is as follows. Involved in the synthesis of meso-diaminopimelate (m-DAP or DL-DAP), required for both lysine and peptidoglycan biosynthesis. Catalyzes the direct conversion of tetrahydrodipicolinate to LL-diaminopimelate. This chain is LL-diaminopimelate aminotransferase, found in Synechococcus sp. (strain CC9902).